The primary structure comprises 429 residues: Glucose-1-phosphate adenylyltransferase (429 aa).

Alpha-D-glucose 1-phosphate-binding positions include tyrosine 116, glycine 181, 196–197 (EK), and serine 214.

It belongs to the bacterial/plant glucose-1-phosphate adenylyltransferase family. Homotetramer.

The enzyme catalyses alpha-D-glucose 1-phosphate + ATP + H(+) = ADP-alpha-D-glucose + diphosphate. The protein operates within glycan biosynthesis; glycogen biosynthesis. Involved in the biosynthesis of ADP-glucose, a building block required for the elongation reactions to produce glycogen. Catalyzes the reaction between ATP and alpha-D-glucose 1-phosphate (G1P) to produce pyrophosphate and ADP-Glc. The chain is Glucose-1-phosphate adenylyltransferase from Paramagnetospirillum magneticum (strain ATCC 700264 / AMB-1) (Magnetospirillum magneticum).